The following is a 95-amino-acid chain: DNA-binding protein CENSYa_1764 (95 aa).

The tract at residues 1 to 21 (MSYTDPDDSLPEHVPGEAEMS) is disordered.

This sequence belongs to the PDCD5 family.

The protein is DNA-binding protein CENSYa_1764 of Cenarchaeum symbiosum (strain A).